A 361-amino-acid chain; its full sequence is Phospho-N-acetylmuramoyl-pentapeptide-transferase (361 aa).

10 helical membrane-spanning segments follow: residues 28 to 48 (LSMFTSMFVVLLIGTPFIKFF), 70 to 90 (IGTPTMGGVLILLGLFSGILL), 94 to 114 (LSNYHIWFLLFIVSGFGLLGA), 129 to 149 (VSFKFKIISQILIAIVGIYGL), 169 to 189 (LIINLGWFFIPFSIFIIVGSS), 205 to 225 (PVILVAACFAFISYVTGNIVF), 237 to 257 (MGEVSVFCGSIIGACLGFLWF), 264 to 284 (IFMGDTGSLALGGSLGAIGII), 289 to 309 (IVLAITGGLFVLEAVSVIIQV), and 338 to 358 (TVVIRFWIISIILAMIGLATL).

Belongs to the glycosyltransferase 4 family. MraY subfamily. Mg(2+) is required as a cofactor.

The protein localises to the cell inner membrane. It carries out the reaction UDP-N-acetyl-alpha-D-muramoyl-L-alanyl-gamma-D-glutamyl-meso-2,6-diaminopimeloyl-D-alanyl-D-alanine + di-trans,octa-cis-undecaprenyl phosphate = di-trans,octa-cis-undecaprenyl diphospho-N-acetyl-alpha-D-muramoyl-L-alanyl-D-glutamyl-meso-2,6-diaminopimeloyl-D-alanyl-D-alanine + UMP. It participates in cell wall biogenesis; peptidoglycan biosynthesis. In terms of biological role, catalyzes the initial step of the lipid cycle reactions in the biosynthesis of the cell wall peptidoglycan: transfers peptidoglycan precursor phospho-MurNAc-pentapeptide from UDP-MurNAc-pentapeptide onto the lipid carrier undecaprenyl phosphate, yielding undecaprenyl-pyrophosphoryl-MurNAc-pentapeptide, known as lipid I. The chain is Phospho-N-acetylmuramoyl-pentapeptide-transferase from Pelagibacter ubique (strain HTCC1062).